A 118-amino-acid polypeptide reads, in one-letter code: MKKVVHIGLPKLSEDELIEVGEIAQKVIINYIFDHLAKSEVRDMEVTARINQGETLDLELEVYVEVPIFVKVDVESLIDEAIDRAYEVVEEYLRKLAKGKGNEGREEAEEPLEEPEEG.

The tract at residues 98–118 is disordered; the sequence is KGKGNEGREEAEEPLEEPEEG. The segment covering 106–118 has biased composition (acidic residues); the sequence is EEAEEPLEEPEEG.

This sequence belongs to the UPF0440 family.

This is an uncharacterized protein from Pyrococcus abyssi (strain GE5 / Orsay).